A 310-amino-acid polypeptide reads, in one-letter code: MGIFMIKRLKKRDVKVPLTVPEDRKEEYIKNYLELTKRTGNVMLFAGDQKIEHLNDDFFGEGIAKDDASPEHLFNIASKGKICGFATQLGLIARYGMDYKKIPYIVKINSKTHLVKTRDPISRALVHVKDVVDLKENSGLKILGVGYTIYPGSEYEHIMFEEASRVILEAHKHGLIAIIWSYPRGKNVKDEKDPHLIAGAAGVAACLGADFVKVNYPKCDNPAERFKEAVLAAGRTGVLCAGGKSIEPEKFLKQIWEQINISGARGNATGRNIHQKPLDAAIRMCNAIYAITIEGKSLEEALKIYYGDRK.

Residues 48-49, H53, D57, and W180 each bind substrate; that span reads DQ. Y182 acts as the Proton donor in catalysis. Substrate contacts are provided by residues R184, 213–215, 241–243, and 270–271; these read KVN, AGG, and GR. The Schiff-base intermediate with dihydroxyacetone-P role is filled by K213. K213 (schiff-base intermediate with substrate) is an active-site residue.

It belongs to the DeoC/FbaB aldolase family.

The catalysed reaction is beta-D-fructose 1,6-bisphosphate = D-glyceraldehyde 3-phosphate + dihydroxyacetone phosphate. It catalyses the reaction beta-D-fructose 1,6-bisphosphate + methylglyoxal = 1-deoxy-D-threo-hexo-2,5-diulose 6-phosphate + D-glyceraldehyde 3-phosphate. The enzyme catalyses beta-D-fructose 1-phosphate + methylglyoxal = 1-deoxy-D-threo-hexo-2,5-diulose 6-phosphate + D-glyceraldehyde. Its pathway is aromatic compound metabolism. In terms of biological role, catalyzes the transaldolization of either fructose-1-P or fructose-1,6-bisphosphate with methylglyoxal to produce 6-deoxy-5-ketofructose-1-phosphate (DKFP). Also catalyzes the reversible aldol condensation of dihydroxyacetone phosphate (DHAP or glycerone-phosphate) with glyceraldehyde 3-phosphate (G3P or GAP) to produce fructose 1,6-bisphosphate (FBP). The chain is Fructose-bisphosphate aldolase/6-deoxy-5-ketofructose 1-phosphate synthase from Methanocaldococcus jannaschii (strain ATCC 43067 / DSM 2661 / JAL-1 / JCM 10045 / NBRC 100440) (Methanococcus jannaschii).